Reading from the N-terminus, the 462-residue chain is uncharacterized protein (462 aa).

The segment at 405 to 462 (QPIGNNKSSPMKREFTAMEEDKTETGDIFKLLSQQKPAKGAKSKSKKYKKTEEDLSAV) is disordered. Residues 415 to 431 (MKREFTAMEEDKTETGD) are compositionally biased toward basic and acidic residues. The span at 443–453 (KGAKSKSKKYK) shows a compositional bias: basic residues.

This is an uncharacterized protein from Magallana gigas (Pacific oyster).